A 737-amino-acid chain; its full sequence is Polyribonucleotide nucleotidyltransferase (737 aa).

Residues D489 and D495 each contribute to the Mg(2+) site. In terms of domain architecture, KH spans 556-615 (PKIDTIKIDVDKIKIVIGKGGETIDKIIAETGVKIDIDEEGNVSIYSSDQDAINRAKEII). The region spanning 625–693 (DEVYRAKVVR…EKGRVDASMK (69 aa)) is the S1 motif domain. The segment at 691 to 737 (SMKALLPRPPKPERDEKGEKSERPYRPRHHKDHKPKKEITETPKDSE) is disordered. Basic and acidic residues-rich tracts occupy residues 700 to 715 (PKPE…ERPY) and 725 to 737 (PKKE…KDSE).

Belongs to the polyribonucleotide nucleotidyltransferase family. Mg(2+) serves as cofactor.

It localises to the cytoplasm. The enzyme catalyses RNA(n+1) + phosphate = RNA(n) + a ribonucleoside 5'-diphosphate. Involved in mRNA degradation. Catalyzes the phosphorolysis of single-stranded polyribonucleotides processively in the 3'- to 5'-direction. The sequence is that of Polyribonucleotide nucleotidyltransferase from Streptococcus pneumoniae (strain Hungary19A-6).